We begin with the raw amino-acid sequence, 125 residues long: Large ribosomal subunit protein bL12 (125 aa).

The protein belongs to the bacterial ribosomal protein bL12 family. Homodimer. Part of the ribosomal stalk of the 50S ribosomal subunit. Forms a multimeric L10(L12)X complex, where L10 forms an elongated spine to which 2 to 4 L12 dimers bind in a sequential fashion. Binds GTP-bound translation factors.

In terms of biological role, forms part of the ribosomal stalk which helps the ribosome interact with GTP-bound translation factors. Is thus essential for accurate translation. This is Large ribosomal subunit protein bL12 from Sinorhizobium medicae (strain WSM419) (Ensifer medicae).